The following is a 20-amino-acid chain: Bulb protein (20 aa).

A disordered region spans residues alanine 1–serine 20.

The protein is Bulb protein of Narcissus pseudonarcissus (Daffodil).